We begin with the raw amino-acid sequence, 340 residues long: MIRSLHTSAVRQGRKKWPKPLPGSVTGNEFVKKLELKAPIAPALDNIEVPDSHPLWQFFCKDKKIVRDQRSFDSSTRPWSVAELRRKSFEDLHALWYVCLKERNILLKEERVTTRMHFENQNGGYRSEHDRVGETMVNIRHVLAERYRAFEEVQQVLPEVRAQANAEFDEKYVTADAVYDSELSLELERHLVAYYGFSTDPRANAGVQVDEKIIEAVKYGAKLKYERYSGATDENGNPIANHGFVHQPKRDIFEQYLMFLANDTTEGVAEALSYIKQYRESNPLPVAPWNAIRVLQHLVEEKMGAAAVFEEALKNKKLDLSEQDILENIPAQFLNKLPKE.

Positions 1-10 are enriched in polar residues; the sequence is MIRSLHTSAV. The interval 1–22 is disordered; sequence MIRSLHTSAVRQGRKKWPKPLP.

Belongs to the universal ribosomal protein uL29 family. In terms of assembly, component of the mitochondrial large ribosomal subunit. Mature mitochondrial ribosomes consist of a small (37S) and a large (54S) subunit. The 37S subunit contains at least 33 different proteins and 1 molecule of RNA (15S). The 54S subunit contains at least 45 different proteins and 1 molecule of RNA (21S).

The protein resides in the mitochondrion. The sequence is that of Large ribosomal subunit protein uL29m (MRPL4) from Yarrowia lipolytica (strain CLIB 122 / E 150) (Yeast).